We begin with the raw amino-acid sequence, 424 residues long: STAM-binding protein (424 aa).

Residues 1–127 (MSDHADVSLP…YEQYKERKKK (127 aa)) are interaction with CHMP3. 2 positions are modified to phosphoserine: S2 and S48. Positions 227–231 (PAKPP) are interaction with STAM. S243 is modified (phosphoserine). The MPN domain occupies 257-388 (IVVPRNLCSE…LTDYGLQEIS (132 aa)). H335, H337, D348, H350, C390, H396, and H398 together coordinate Zn(2+). The JAMM motif signature appears at 335–348 (HTHPTQTAFLSSVD).

The protein belongs to the peptidase M67C family. Interacts with STAM. Interacts with SMAD6 and SMAD7. Interacts with CHMP3; the interaction appears to relieve the autoinhibition of CHMP3. Interacts with SMURF2 and RNF11; this interaction promotes ubiquitination. It depends on Zn(2+) as a cofactor. Phosphorylated after BMP type I receptor activation. In terms of processing, ubiquitinated by SMURF2 in the presence of RNF11.

The protein resides in the nucleus. It is found in the membrane. The protein localises to the cytoplasm. It localises to the early endosome. Inhibited by N-ethylmaleimide. Functionally, zinc metalloprotease that specifically cleaves 'Lys-63'-linked polyubiquitin chains. Does not cleave 'Lys-48'-linked polyubiquitin chains. Plays a role in signal transduction for cell growth and MYC induction mediated by IL-2 and GM-CSF. Potentiates BMP (bone morphogenetic protein) signaling by antagonizing the inhibitory action of SMAD6 and SMAD7. Has a key role in regulation of cell surface receptor-mediated endocytosis and ubiquitin-dependent sorting of receptors to lysosomes. Endosomal localization of STAMBP is required for efficient EGFR degradation but not for its internalization. Involved in the negative regulation of PI3K-AKT-mTOR and RAS-MAP signaling pathways. This is STAM-binding protein (Stambp) from Rattus norvegicus (Rat).